Here is a 285-residue protein sequence, read N- to C-terminus: uncharacterized protein (285 aa).

One can recognise a Guanylate cyclase domain in the interval 92-199 (TLLLADVEES…PTINRTARLR (108 aa)).

This sequence belongs to the adenylyl cyclase class-4/guanylyl cyclase family.

This is an uncharacterized protein from Mycobacterium tuberculosis (strain ATCC 25618 / H37Rv).